The following is a 339-amino-acid chain: DNA-directed RNA polymerase subunit alpha (339 aa).

The interval 1–233 is alpha N-terminal domain (alpha-NTD); the sequence is MVREEVAGST…DLFLPFLHAE (233 aa). The interval 264 to 339 is alpha C-terminal domain (alpha-CTD); sequence KKGIPLNCIF…IDLLKNKLSF (76 aa).

Belongs to the RNA polymerase alpha chain family. As to quaternary structure, in plastids the minimal PEP RNA polymerase catalytic core is composed of four subunits: alpha, beta, beta', and beta''. When a (nuclear-encoded) sigma factor is associated with the core the holoenzyme is formed, which can initiate transcription.

The protein resides in the plastid. It is found in the chloroplast. The enzyme catalyses RNA(n) + a ribonucleoside 5'-triphosphate = RNA(n+1) + diphosphate. Its function is as follows. DNA-dependent RNA polymerase catalyzes the transcription of DNA into RNA using the four ribonucleoside triphosphates as substrates. The protein is DNA-directed RNA polymerase subunit alpha of Festucopsis festucoides.